Consider the following 63-residue polypeptide: MKISCFLLLILSLYFFQINQAIGPDTKKCVQRKNACHYFECPWLYYSVGTCYKGKGKCCQKRY.

The first 21 residues, 1–21 (MKISCFLLLILSLYFFQINQA), serve as a signal peptide directing secretion. 3 disulfide bridges follow: C29/C58, C36/C51, and C41/C59.

This sequence belongs to the beta-defensin family. In terms of tissue distribution, only expressed in epididymis (caput, corpus and cauda).

Its subcellular location is the secreted. Functionally, synthetic Defb38 kills both Gram-negative (E.coli and P.aeruginosa) and Gram-positive (E.faecium) bacteria. This Mus musculus (Mouse) protein is Beta-defensin 38 (Defb38).